The primary structure comprises 814 residues: Phosphatidylinositol 3-kinase VPS34 (814 aa).

One can recognise a C2 PI3K-type domain in the interval 25 to 177; it reads LDGNLPVKKS…EKLMNKYERG (153 aa). A PIK helical domain is found at 274–449; it reads DRDLKPSNIE…YSTYELLEEN (176 aa). The PI3K/PI4K catalytic domain occupies 532–799; that stretch reads VAGESSLFKS…LINESVSALF (268 aa). The segment at 538 to 544 is G-loop; sequence LFKSALH. Residues 668 to 676 form a catalytic loop region; sequence GIGDRHLDN. Residues 687 to 708 form an activation loop region; the sequence is HVDFAFILGRDPKPFPPPMKLC.

This sequence belongs to the PI3/PI4-kinase family. As to quaternary structure, interacts with VPS15. Component of a complex made of VPS38/USL1 and PI3K main subunits such as VPS15, ATG6/VPS30 and VPS34. Binds directly to VPS38/USL1.

It carries out the reaction a 1,2-diacyl-sn-glycero-3-phospho-(1D-myo-inositol) + ATP = a 1,2-diacyl-sn-glycero-3-phospho-(1D-myo-inositol-3-phosphate) + ADP + H(+). With respect to regulation, the PI3K inhibitor LY294002 affects phosphatidylinositol 3-phosphate (PI3P) levels and triggers a decrease in proline, hydrophobic and aromatic amino acids, and sugars (e.g. raffinose) accumulation in response to salt treatment correlated with lower P5CS1 expression and higher ProDH1 expression, genes involved in proline biosynthesis and catabolism, respectively. Involved in the negative regulation of proline, hydrophobic and aromatic amino acids accumulation, especially in response to salt (NaCl), either through inhibition of their synthesis and/or promotion of their catabolism. Triggers defense responses (e.g. pathogenesis related (PR1 and PR5) gene expression and hydrogen peroxide H(2)O(2) burst) to the bacterial pathogen compatible Pseudomonas syringae pv tomato DC3000 (Pst DC3000) and incompatible Pst DC3000 (avrRpt2), by regulating reactive ogygen species (ROS) production and by promoting stomatal closure. This chain is Phosphatidylinositol 3-kinase VPS34, found in Arabidopsis thaliana (Mouse-ear cress).